A 94-amino-acid polypeptide reads, in one-letter code: Co-chaperonin GroES (94 aa).

The protein belongs to the GroES chaperonin family. Heptamer of 7 subunits arranged in a ring. Interacts with the chaperonin GroEL.

It localises to the cytoplasm. Together with the chaperonin GroEL, plays an essential role in assisting protein folding. The GroEL-GroES system forms a nano-cage that allows encapsulation of the non-native substrate proteins and provides a physical environment optimized to promote and accelerate protein folding. GroES binds to the apical surface of the GroEL ring, thereby capping the opening of the GroEL channel. The polypeptide is Co-chaperonin GroES (Streptococcus pneumoniae (strain Hungary19A-6)).